A 94-amino-acid chain; its full sequence is PqqA binding protein (94 aa).

Belongs to the PqqD family. In terms of assembly, monomer. Interacts with PqqE.

It functions in the pathway cofactor biosynthesis; pyrroloquinoline quinone biosynthesis. Its function is as follows. Functions as a PqqA binding protein and presents PqqA to PqqE, in the pyrroloquinoline quinone (PQQ) biosynthetic pathway. This is PqqA binding protein from Pseudomonas savastanoi pv. phaseolicola (strain 1448A / Race 6) (Pseudomonas syringae pv. phaseolicola (strain 1448A / Race 6)).